A 237-amino-acid chain; its full sequence is LexA repressor (237 aa).

Residues 26 to 46 constitute a DNA-binding region (H-T-H motif); sequence FDEMKEALDLRSKSGIHRLIT. Residues 84 to 110 are disordered; the sequence is GFSPSVIEGGAQPKPSSRDLAPARSSG. Active-site for autocatalytic cleavage activity residues include Ser158 and Lys196.

Belongs to the peptidase S24 family. As to quaternary structure, homodimer.

It carries out the reaction Hydrolysis of Ala-|-Gly bond in repressor LexA.. Its function is as follows. Represses a number of genes involved in the response to DNA damage (SOS response), including recA and lexA. In the presence of single-stranded DNA, RecA interacts with LexA causing an autocatalytic cleavage which disrupts the DNA-binding part of LexA, leading to derepression of the SOS regulon and eventually DNA repair. In Parvibaculum lavamentivorans (strain DS-1 / DSM 13023 / NCIMB 13966), this protein is LexA repressor.